The primary structure comprises 504 residues: DnaJ homolog subfamily C member 3 (504 aa).

The signal sequence occupies residues 1 to 31 (MVAPGSVTSRLGSVFPFLLVLVDLQYEGAEC). TPR repeat units lie at residues 37–70 (VEKHLELGKKLLAAGQLADALSQFHAAVDGDPDN), 72–104 (IAYYRRATVFLAMGKSKAALPDLTKVIQLKMDF), 105–138 (TAARLQRGHLLLKQGKLDEAEDDFKKVLKSNPSE), 154–187 (MQRLRSQALNAFGSGDYTAAIAFLDKILEVCVWD), 189–221 (ELRELRAECFIKEGEPRKAISDLKAASKLKNDN), 222–255 (TEAFYKISTLYYQLGDHELSLSEVRECLKLDQDH), 268–301 (LNKLIESAEELIRDGRYTDATSKYESVMKTEPSI), 306–339 (VRSKERICHCFSKDEKPVEAIRVCSEVLQMEPDN), and 340–373 (VNALKDRAEAYLIEEMYDEAIQDYETAQEHNEND). Residues C248 and C258 are joined by a disulfide bond. S274 carries the post-translational modification Phosphoserine; by FAM20C. A disulfide bond links C313 and C329. Residues 375 to 393 (QIREGLEKAQRLLKQSQKR) are flexible linker. Positions 394–462 (DYYKILGVKR…EMRKKFDDGE (69 aa)) constitute a J domain. The segment at 451 to 481 (DPEMRKKFDDGEDPLDAESQQGGGGNPFHRS) is disordered.

As to quaternary structure, interacts with EIF2AK4/GCN2; this interaction occurs under endoplasmic reticulum (ER) stress, hypothermic and amino acid starving stress conditions and inhibits EIF2AK4/GCN2 kinase activity. Interacts with EIF2AK3. Interacts with EIF2AK2. Forms a trimeric complex with DNAJB1 and HSPA8. Interacts with THAP12. In terms of tissue distribution, widely expressed with high level in the pancreas and testis. Also expressed in cell lines with different levels.

Its subcellular location is the endoplasmic reticulum. Involved in the unfolded protein response (UPR) during endoplasmic reticulum (ER) stress. Acts as a negative regulator of the EIF2AK4/GCN2 kinase activity by preventing the phosphorylation of eIF-2-alpha at 'Ser-52' and hence attenuating general protein synthesis under ER stress, hypothermic and amino acid starving stress conditions. Co-chaperone of HSPA8/HSC70, it stimulates its ATPase activity. May inhibit both the autophosphorylation of EIF2AK2/PKR and the ability of EIF2AK2 to catalyze phosphorylation of the EIF2A. May inhibit EIF2AK3/PERK activity. This is DnaJ homolog subfamily C member 3 (DNAJC3) from Homo sapiens (Human).